Here is a 354-residue protein sequence, read N- to C-terminus: DNA polymerase IV (354 aa).

Residues 14–198 (IIHIDMDAFF…MDIAKFHGVG (185 aa)) enclose the UmuC domain. Mg(2+)-binding residues include aspartate 18 and aspartate 116. Glutamate 117 is a catalytic residue.

This sequence belongs to the DNA polymerase type-Y family. In terms of assembly, monomer. The cofactor is Mg(2+).

The protein localises to the cytoplasm. It catalyses the reaction DNA(n) + a 2'-deoxyribonucleoside 5'-triphosphate = DNA(n+1) + diphosphate. Its function is as follows. Poorly processive, error-prone DNA polymerase involved in untargeted mutagenesis. Copies undamaged DNA at stalled replication forks, which arise in vivo from mismatched or misaligned primer ends. These misaligned primers can be extended by PolIV. Exhibits no 3'-5' exonuclease (proofreading) activity. May be involved in translesional synthesis, in conjunction with the beta clamp from PolIII. The polypeptide is DNA polymerase IV (Streptococcus sanguinis (strain SK36)).